Reading from the N-terminus, the 224-residue chain is Dimethyl sulfoxide reductase transcriptional activator (224 aa).

The region spanning 158-209 is the HTH bat-type domain; that stretch reads LTDKQREAAAAAVAKGYYATPRGADLSDLATALGISKSAVSQRLSAVESKLA.

In terms of biological role, involved in activating dmsEABCD gene expression related to dimethyl sulfoxide (DMSO) reductase. Required for anaerobic respiration on dimethyl sulfoxide (DMSO) and trimethylamine N-oxide (TMAO). The protein is Dimethyl sulfoxide reductase transcriptional activator (dmsR) of Halobacterium salinarum (strain ATCC 700922 / JCM 11081 / NRC-1) (Halobacterium halobium).